The sequence spans 85 residues: Acylphosphatase (85 aa).

The 83-residue stretch at 3-85 (AARFVVSGVV…PARFRRLKTL (83 aa)) folds into the Acylphosphatase-like domain. Active-site residues include Arg18 and Asn36. The tract at residues 66–85 (PPRSRRSRARPARFRRLKTL) is disordered.

It belongs to the acylphosphatase family.

It carries out the reaction an acyl phosphate + H2O = a carboxylate + phosphate + H(+). This chain is Acylphosphatase (acyP), found in Xanthomonas axonopodis pv. citri (strain 306).